The primary structure comprises 127 residues: Gamma-synuclein (127 aa).

Repeat copies occupy residues 20-30 (EKTKQGVTEAA) and 31-41 (EKTKEGVMYVG). The 4 X 11 AA tandem repeats of [EGSA]-K-T-K-[EQ]-[GQ]-V-X(4) stretch occupies residues 20–67 (EKTKQGVTEAAEKTKEGVMYVGAKTKENVVQSVTSVAEKTKEQANAVS). The 3; approximate repeat unit spans residues 42–56 (AKTKENVVQSVTSVA). Repeat 4 spans residues 57–67 (EKTKEQANAVS). Serine 67 and serine 72 each carry phosphoserine. The tract at residues 96–127 (RKEDLRPSAPQQEGEASKEKEEVAEEAQSGGD) is disordered. Position 124 is a phosphoserine; by BARK1, CaMK2 and CK2 (serine 124).

The protein belongs to the synuclein family. As to quaternary structure, may be a centrosome-associated protein. Interacts with MYOC; affects its secretion and its aggregation. Phosphorylated. Phosphorylation by GRK5 appears to occur on residues distinct from the residue phosphorylated by other kinases. Highly expressed in brain, particularly in the substantia nigra. Also expressed in the corpus callosum, heart, skeletal muscle, ovary, testis, colon and spleen. Weak expression in pancreas, kidney and lung.

The protein localises to the cytoplasm. The protein resides in the perinuclear region. Its subcellular location is the cytoskeleton. It is found in the microtubule organizing center. It localises to the centrosome. The protein localises to the spindle. In terms of biological role, plays a role in neurofilament network integrity. May be involved in modulating axonal architecture during development and in the adult. In vitro, increases the susceptibility of neurofilament-H to calcium-dependent proteases. May also function in modulating the keratin network in skin. Activates the MAPK and Elk-1 signal transduction pathway. The chain is Gamma-synuclein (SNCG) from Homo sapiens (Human).